The following is a 37-amino-acid chain: Large ribosomal subunit protein bL36c (37 aa).

It belongs to the bacterial ribosomal protein bL36 family.

The protein resides in the plastid. It localises to the chloroplast. The polypeptide is Large ribosomal subunit protein bL36c (Cucumis sativus (Cucumber)).